The following is a 729-amino-acid chain: Translation initiation factor IF-2 (729 aa).

The disordered stretch occupies residues 20–141; the sequence is QFAGGGRGPG…TTTVRAPVRP (122 aa). Positions 22 to 91 are enriched in gly residues; the sequence is AGGGRGPGNP…PGGGRGGGRG (70 aa). Residues 92-108 are compositionally biased toward basic and acidic residues; sequence GDGRRRDESFVENEGGR. The span at 112 to 127 shows a compositional bias: low complexity; sequence SGRTTSTATTARTPGG. Residues 229–396 form the tr-type G domain; that stretch reads PRPPVVTIMG…IILLVADLNE (168 aa). The interval 238–245 is G1; sequence GHVDHGKT. 238-245 provides a ligand contact to GTP; it reads GHVDHGKT. The G2 stretch occupies residues 263–267; the sequence is GITQH. Residues 284-287 form a G3 region; that stretch reads DTPG. GTP contacts are provided by residues 284–288 and 338–341; these read DTPGH and NKID. The tract at residues 338 to 341 is G4; sequence NKID. A G5 region spans residues 374 to 376; sequence SAK.

Belongs to the TRAFAC class translation factor GTPase superfamily. Classic translation factor GTPase family. IF-2 subfamily.

It is found in the cytoplasm. Functionally, one of the essential components for the initiation of protein synthesis. Protects formylmethionyl-tRNA from spontaneous hydrolysis and promotes its binding to the 30S ribosomal subunits. Also involved in the hydrolysis of GTP during the formation of the 70S ribosomal complex. This is Translation initiation factor IF-2 from Roseiflexus sp. (strain RS-1).